A 338-amino-acid chain; its full sequence is uncharacterized protein (338 aa).

Residues 111 to 334 form the Radical SAM core domain; it reads HLGEERVLVP…LELAEKYNLD (224 aa). The [4Fe-4S] cluster site is built by Cys-129, Cys-133, and Cys-136.

The cofactor is [4Fe-4S] cluster.

This is an uncharacterized protein from Methanocaldococcus jannaschii (strain ATCC 43067 / DSM 2661 / JAL-1 / JCM 10045 / NBRC 100440) (Methanococcus jannaschii).